The following is a 117-amino-acid chain: Cuticular protein 47Eg (117 aa).

The first 16 residues, 1 to 16 (MKFFIAFACLLAVALA), serve as a signal peptide directing secretion. The region spanning 31–97 (VDGFAYAVEL…SANPPLPTPP (67 aa)) is the Chitin-binding type R&amp;R domain.

In terms of biological role, component of the larval cuticle. The protein is Cuticular protein 47Eg (Cpr47Eg) of Drosophila melanogaster (Fruit fly).